The following is a 139-amino-acid chain: MIENKKKPNPIDIHVGSRIRLRRTMLGMSQEKLGESLGITFQQIQKYEKGTNRVGASRLQNISQILNVPVSFFFEDAPGDGGGTGPGMAEASSSNYVVDFLSSSEGLQLNRAFVKISDPKVRRKLVDLVKALAAEAESE.

The HTH cro/C1-type domain maps to isoleucine 19–phenylalanine 73. The H-T-H motif DNA-binding region spans glutamine 30 to lysine 49.

This is an uncharacterized protein from Rhizobium meliloti (strain 1021) (Ensifer meliloti).